A 323-amino-acid polypeptide reads, in one-letter code: Ubiquinone biosynthesis protein COQ4, mitochondrial (323 aa).

The N-terminal 29 residues, 1–29 (MLKSTVSNTRIKCCRIDQRRNYLFTALAS), are a transit peptide targeting the mitochondrion. Residues histidine 205, aspartate 206, histidine 209, and glutamate 221 each coordinate Zn(2+).

The protein belongs to the COQ4 family. As to quaternary structure, component of a multi-subunit COQ enzyme complex, composed of at least COQ3, COQ4, COQ5, COQ6, COQ7 and COQ9. The cofactor is Zn(2+).

Its subcellular location is the mitochondrion inner membrane. It carries out the reaction a 4-hydroxy-3-methoxy-5-(all-trans-polyprenyl)benzoate + H(+) = a 2-methoxy-6-(all-trans-polyprenyl)phenol + CO2. The protein operates within cofactor biosynthesis; ubiquinone biosynthesis. Functionally, lyase that catalyzes the C1-decarboxylation of 4-hydroxy-3-methoxy-5-(all-trans-polyprenyl)benzoic acid into 2-methoxy-6-(all-trans-polyprenyl)phenol during ubiquinone biosynthesis. The chain is Ubiquinone biosynthesis protein COQ4, mitochondrial from Candida dubliniensis (strain CD36 / ATCC MYA-646 / CBS 7987 / NCPF 3949 / NRRL Y-17841) (Yeast).